A 315-amino-acid chain; its full sequence is Olfactory receptor 3A3 (315 aa).

The Extracellular portion of the chain corresponds to 1–28 (MESEAGTNRTAVAEFMLLGLVQTEEMQS). N8 carries an N-linked (GlcNAc...) asparagine glycan. The helical transmembrane segment at 29 to 52 (VIFVLLLFAYLVTTGGNLSILAAI) threads the bilayer. Topologically, residues 53–60 (LVEPKLHT) are cytoplasmic. Residues 61-82 (PMYFFLGNLSVLDVGCITVTVP) form a helical membrane-spanning segment. Residues 83-103 (AMLGRLLSHKSTISYDACLSQ) lie on the Extracellular side of the membrane. A disulfide bridge links C100 with C192. Residues 104 to 123 (LFFFHLLAGMDCFLLTAMAY) traverse the membrane as a helical segment. Residues 124 to 143 (DRFLAICRPLTYSTHMNQRV) lie on the Cytoplasmic side of the membrane. The chain crosses the membrane as a helical span at residues 144-161 (QRMLVAVSWTCAFTNALT). Residues 162–199 (HTIALTTLNFCGPSVINHFYCDLPQLFQLSCSSTQLNE) are Extracellular-facing. The helical transmembrane segment at 200 to 222 (LLLFVAAAVMAVAPLVFISVSYA) threads the bilayer. Residues 223–239 (HVVAAVLQIHSAEGRKK) lie on the Cytoplasmic side of the membrane. The helical transmembrane segment at 240–262 (AFSTCGSHLTVVGIFYGTGVFSY) threads the bilayer. At 263–275 (MRLGSVESSDKDK) the chain is on the extracellular side. The helical transmembrane segment at 276 to 295 (GVGVFMTVINPMLNPLIYSL) threads the bilayer. Residues 296 to 315 (RNTDVQGALCQLLVVKRSLT) lie on the Cytoplasmic side of the membrane.

Belongs to the G-protein coupled receptor 1 family.

The protein resides in the cell membrane. In terms of biological role, odorant receptor. In Pan troglodytes (Chimpanzee), this protein is Olfactory receptor 3A3 (OR3A3).